The following is a 710-amino-acid chain: Polyribonucleotide nucleotidyltransferase (710 aa).

Mg(2+) is bound by residues D489 and D495. Residues P556–I615 form the KH domain. The region spanning G625–K693 is the S1 motif domain. Positions S691 to D710 are disordered. Residues P700 to D710 show a composition bias toward basic and acidic residues.

This sequence belongs to the polyribonucleotide nucleotidyltransferase family. Requires Mg(2+) as cofactor.

It localises to the cytoplasm. It catalyses the reaction RNA(n+1) + phosphate = RNA(n) + a ribonucleoside 5'-diphosphate. Functionally, involved in mRNA degradation. Catalyzes the phosphorolysis of single-stranded polyribonucleotides processively in the 3'- to 5'-direction. In Streptococcus pyogenes serotype M2 (strain MGAS10270), this protein is Polyribonucleotide nucleotidyltransferase.